Consider the following 175-residue polypeptide: Peptide deformylase (175 aa).

Positions 98 and 140 each coordinate Fe cation. The active site involves E141. Fe cation is bound at residue H144.

Belongs to the polypeptide deformylase family. The cofactor is Fe(2+).

It catalyses the reaction N-terminal N-formyl-L-methionyl-[peptide] + H2O = N-terminal L-methionyl-[peptide] + formate. Removes the formyl group from the N-terminal Met of newly synthesized proteins. Requires at least a dipeptide for an efficient rate of reaction. N-terminal L-methionine is a prerequisite for activity but the enzyme has broad specificity at other positions. The polypeptide is Peptide deformylase (Nitrobacter hamburgensis (strain DSM 10229 / NCIMB 13809 / X14)).